The primary structure comprises 293 residues: Ribosomal protein L11 methyltransferase (293 aa).

S-adenosyl-L-methionine contacts are provided by Thr145, Gly166, Asp188, and Asn230.

The protein belongs to the methyltransferase superfamily. PrmA family.

Its subcellular location is the cytoplasm. The enzyme catalyses L-lysyl-[protein] + 3 S-adenosyl-L-methionine = N(6),N(6),N(6)-trimethyl-L-lysyl-[protein] + 3 S-adenosyl-L-homocysteine + 3 H(+). Methylates ribosomal protein L11. This Salmonella heidelberg (strain SL476) protein is Ribosomal protein L11 methyltransferase.